Reading from the N-terminus, the 355-residue chain is Alanine racemase (355 aa).

Lysine 34 (proton acceptor; specific for D-alanine) is an active-site residue. Lysine 34 is subject to N6-(pyridoxal phosphate)lysine. Arginine 133 is a substrate binding site. Tyrosine 249 acts as the Proton acceptor; specific for L-alanine in catalysis. Position 297 (methionine 297) interacts with substrate.

The protein belongs to the alanine racemase family. Requires pyridoxal 5'-phosphate as cofactor.

The catalysed reaction is L-alanine = D-alanine. It functions in the pathway amino-acid biosynthesis; D-alanine biosynthesis; D-alanine from L-alanine: step 1/1. Functionally, catalyzes the interconversion of L-alanine and D-alanine. May also act on other amino acids. This Rickettsia conorii (strain ATCC VR-613 / Malish 7) protein is Alanine racemase (alr).